A 689-amino-acid polypeptide reads, in one-letter code: Glycine--tRNA ligase beta subunit (689 aa).

The protein belongs to the class-II aminoacyl-tRNA synthetase family. In terms of assembly, tetramer of two alpha and two beta subunits.

The protein localises to the cytoplasm. The enzyme catalyses tRNA(Gly) + glycine + ATP = glycyl-tRNA(Gly) + AMP + diphosphate. This Salmonella arizonae (strain ATCC BAA-731 / CDC346-86 / RSK2980) protein is Glycine--tRNA ligase beta subunit.